The sequence spans 76 residues: Large ribosomal subunit protein uL24 (76 aa).

The protein belongs to the universal ribosomal protein uL24 family. As to quaternary structure, part of the 50S ribosomal subunit.

In terms of biological role, one of two assembly initiator proteins, it binds directly to the 5'-end of the 23S rRNA, where it nucleates assembly of the 50S subunit. Its function is as follows. One of the proteins that surrounds the polypeptide exit tunnel on the outside of the subunit. This chain is Large ribosomal subunit protein uL24, found in Sulfurimonas denitrificans (strain ATCC 33889 / DSM 1251) (Thiomicrospira denitrificans (strain ATCC 33889 / DSM 1251)).